We begin with the raw amino-acid sequence, 196 residues long: MNPAHEPLPLEFYNKPTIELARSLLGCLLVKETEEGPASGYIVETEAYKGPGDRAAHSYGNRRTKRTEIMYREAGVVYTYTMHTHTLINVVSGGADEPEAVLIRALEPHEGLALMEKRRSGKKPRDWTNGPGKLTKALSITMNDYGRPLTGPPLYIAKGYEPQDILSGPRIGIDNSGEAREYPWRFWIKGNRYVSR.

It belongs to the DNA glycosylase MPG family.

This is Putative 3-methyladenine DNA glycosylase from Bacillus licheniformis (strain ATCC 14580 / DSM 13 / JCM 2505 / CCUG 7422 / NBRC 12200 / NCIMB 9375 / NCTC 10341 / NRRL NRS-1264 / Gibson 46).